The primary structure comprises 354 residues: 3-dehydroquinate synthase (354 aa).

NAD(+) contacts are provided by residues 69 to 74, 103 to 107, 127 to 128, K140, and K149; these read DGEAEK, GVIGD, and TS. E182, H245, and H262 together coordinate Zn(2+).

Belongs to the sugar phosphate cyclases superfamily. Dehydroquinate synthase family. Requires Co(2+) as cofactor. Zn(2+) is required as a cofactor. It depends on NAD(+) as a cofactor.

It is found in the cytoplasm. It carries out the reaction 7-phospho-2-dehydro-3-deoxy-D-arabino-heptonate = 3-dehydroquinate + phosphate. It functions in the pathway metabolic intermediate biosynthesis; chorismate biosynthesis; chorismate from D-erythrose 4-phosphate and phosphoenolpyruvate: step 2/7. Its function is as follows. Catalyzes the conversion of 3-deoxy-D-arabino-heptulosonate 7-phosphate (DAHP) to dehydroquinate (DHQ). In Colwellia psychrerythraea (strain 34H / ATCC BAA-681) (Vibrio psychroerythus), this protein is 3-dehydroquinate synthase.